A 163-amino-acid chain; its full sequence is Putative pre-16S rRNA nuclease (163 aa).

Belongs to the YqgF nuclease family.

It is found in the cytoplasm. Could be a nuclease involved in processing of the 5'-end of pre-16S rRNA. This Rhodopseudomonas palustris (strain BisA53) protein is Putative pre-16S rRNA nuclease.